The chain runs to 537 residues: Multidrug resistance protein Stp (537 aa).

The next 14 helical transmembrane spans lie at leucine 6 to valine 26, tryptophan 46 to alanine 66, isoleucine 77 to valine 97, alanine 104 to phenylalanine 124, isoleucine 136 to valine 156, serine 163 to valine 183, leucine 200 to glycine 220, serine 223 to leucine 243, tyrosine 262 to leucine 282, leucine 300 to valine 320, valine 327 to glutamate 347, alanine 352 to isoleucine 372, alanine 397 to alanine 417, and valine 478 to phenylalanine 498.

It belongs to the major facilitator superfamily. EmrB family.

It localises to the cell membrane. The sequence is that of Multidrug resistance protein Stp (stp) from Mycobacterium tuberculosis (strain CDC 1551 / Oshkosh).